Consider the following 174-residue polypeptide: Photosystem II repair protein PSB27-H1, chloroplastic (174 aa).

The disordered stretch occupies residues 1-35 (MASASATATLLKPNLPPHKPTIIASSVSPPLPPPR). Thr94 is modified (phosphothreonine). Tyr132 is subject to Phosphotyrosine.

Belongs to the Psb27 family.

It localises to the plastid. It is found in the chloroplast thylakoid membrane. Probably involved in repair of photodamaged photosystem II (PSII). This chain is Photosystem II repair protein PSB27-H1, chloroplastic (PSB27-1), found in Arabidopsis thaliana (Mouse-ear cress).